A 292-amino-acid chain; its full sequence is MGDNEQKALQLMAEAEKKLTQQKGFLGSLFGGSNKVEDAIECYQRAGNMFKMSKNWTKAGECFCEAATLHARAGSRHDAGTCYVDASNCYKKVDVESAVNCLMKSIDIYTDMGRFTMAAKHHQSIAEMYESDPNNLAKSIQHYEQAADYFKGEESVSSANKCMLKVAQYAAQLEDYEKAISIYEQVAASSLESSLLKYSAKEYFFRAALCHLSVDLLNAQHAIEKYAQQYPAFQDSREFKLIKVLCENLEEQNIEGFTEAVKDYDSISRLDQWYTTILLRIKKAADEDPDLR.

This sequence belongs to the SNAP family.

The protein localises to the cytoplasmic vesicle. It localises to the membrane. Functionally, required for vesicular transport between the endoplasmic reticulum and the Golgi apparatus. Also between the endosome and phagosome. The sequence is that of Alpha-soluble NSF attachment protein from Drosophila melanogaster (Fruit fly).